We begin with the raw amino-acid sequence, 334 residues long: NADH dehydrogenase (ubiquinone) complex I, assembly factor 6 homolog (334 aa).

The transit peptide at 1 to 11 directs the protein to the mitochondrion; the sequence is MRRLVRNWNCR.

It belongs to the NDUFAF6 family. In terms of assembly, associates with mitochondrial complex I assembly intermediates during its biogenesis. Forms a complex including sicily, ND-42 and Hsp83; the complex is necessary to chaperone ND-42 in the cytoplasm before mitochondrial import; the interaction between sicily and ND-42 is direct and occurs preferably between the unprocessed forms in the cytoplasm; the interaction with Hsp83 is direct. Interacts with ND-30; interaction is stronger between the unprocessed forms in the cytoplasm. In terms of tissue distribution, expressed in the ventral nerve cord, larval brain, motor neuron axons, imaginal disks, and muscles (at protein level).

The protein localises to the mitochondrion inner membrane. The protein resides in the cytoplasm. Its subcellular location is the cytosol. Functionally, involved in the assembly of mitochondrial NADH:ubiquinone oxidoreductase complex (Complex I) at early stages. Interacts with cytosolic Hsp90 to chaperone the Complex I subunit ND-42 in the cytoplasm. The protein is NADH dehydrogenase (ubiquinone) complex I, assembly factor 6 homolog of Drosophila melanogaster (Fruit fly).